The following is a 197-amino-acid chain: Glycerol-3-phosphate acyltransferase (197 aa).

Helical transmembrane passes span 1-21, 50-70, 82-102, 112-132, and 159-179; these read MDFI…GLLI, LGFA…VLAA, IVCL…YLGF, LGVF…VFAA, and GASQ…WIKH.

Belongs to the PlsY family. Probably interacts with PlsX.

The protein resides in the cell inner membrane. The enzyme catalyses an acyl phosphate + sn-glycerol 3-phosphate = a 1-acyl-sn-glycero-3-phosphate + phosphate. It functions in the pathway lipid metabolism; phospholipid metabolism. Its function is as follows. Catalyzes the transfer of an acyl group from acyl-phosphate (acyl-PO(4)) to glycerol-3-phosphate (G3P) to form lysophosphatidic acid (LPA). This enzyme utilizes acyl-phosphate as fatty acyl donor, but not acyl-CoA or acyl-ACP. This Desulfotalea psychrophila (strain LSv54 / DSM 12343) protein is Glycerol-3-phosphate acyltransferase.